Here is a 361-residue protein sequence, read N- to C-terminus: Probable mannose-1-phosphate guanylyltransferase 2 (361 aa).

GDP-alpha-D-mannose contacts are provided by Leu-6 and Val-7. Diphosphate is bound by residues Gly-9, Gly-11, Thr-12, Arg-13, and Lys-23. GDP-alpha-D-mannose-binding residues include Gly-85, Asn-109, Asp-111, Gly-146, and Asn-173.

Belongs to the transferase hexapeptide repeat family.

It catalyses the reaction alpha-D-mannose 1-phosphate + GTP + H(+) = GDP-alpha-D-mannose + diphosphate. Its pathway is nucleotide-sugar biosynthesis; GDP-alpha-D-mannose biosynthesis; GDP-alpha-D-mannose from alpha-D-mannose 1-phosphate (GTP route): step 1/1. Its function is as follows. Catalyzes a reaction of the Smirnoff-Wheeler pathway, the major route to ascorbate biosynthesis in plants. This chain is Probable mannose-1-phosphate guanylyltransferase 2, found in Oryza sativa subsp. japonica (Rice).